A 218-amino-acid polypeptide reads, in one-letter code: Probable septum site-determining protein MinC (218 aa).

It belongs to the MinC family. Interacts with MinD and FtsZ.

In terms of biological role, cell division inhibitor that blocks the formation of polar Z ring septums. Rapidly oscillates between the poles of the cell to destabilize FtsZ filaments that have formed before they mature into polar Z rings. Prevents FtsZ polymerization. The polypeptide is Probable septum site-determining protein MinC (Kosmotoga olearia (strain ATCC BAA-1733 / DSM 21960 / TBF 19.5.1)).